Here is a 707-residue protein sequence, read N- to C-terminus: Protein kinase C theta type (707 aa).

A C2 domain is found at 1–107 (MSPFLRIGLS…KNNGRTEIWL (107 aa)). Residue tyrosine 90 is modified to Phosphotyrosine; by LCK. Residues 159 to 209 (CHEFTATFFPQPTFCSVCHEFVWGLNKQGYQCRQCNAAIHKKCIDKVIAKC) form a Phorbol-ester/DAG-type 1 zinc finger. Threonine 219 bears the Phosphothreonine; by autocatalysis mark. The segment at 231–281 (PHRFKVYNYKSPTFCEHCGTLLWGLARQGLKCDACGMNVHHRCQTKVANLC) adopts a Phorbol-ester/DAG-type 2 zinc-finger fold. Positions 327-365 (ETRPPCVPTPGKREPQGISWDSPLDGSNKSAGPPEPEVS) are disordered. Serine 348 bears the Phosphoserine mark. The Protein kinase domain occupies 380–634 (FILHKMLGKG…RGDIRQHPLF (255 aa)). ATP-binding positions include 386-394 (LGKGSFGKV) and lysine 409. Aspartate 504 functions as the Proton acceptor in the catalytic mechanism. Threonine 538 is modified (phosphothreonine; by PDPK1). The region spanning 635–706 (REINWEELER…INPGMETLIC (72 aa)) is the AGC-kinase C-terminal domain. Serine 676 carries the post-translational modification Phosphoserine; by autocatalysis. Serine 685 carries the phosphoserine modification. Residue serine 695 is modified to Phosphoserine; by autocatalysis.

It belongs to the protein kinase superfamily. AGC Ser/Thr protein kinase family. PKC subfamily. Part of a membrane raft complex composed at least of BCL10, CARD11, MALT1 and IKBKB. Interacts with GLRX3 (via N-terminus). Interacts with ECT2. Interacts with CCDC88A/GIV; the interaction leads to phosphorylation of CCDC88A and inhibition of its guanine nucleotide exchange factor activity. Interacts with CD28. It depends on Mg(2+) as a cofactor. Post-translationally, autophosphorylation at Thr-219 is required for targeting to the TCR and cellular function of PRKCQ upon antigen receptor ligation. Following TCR stimulation, phosphorylated at Tyr-90 and Ser-685. T-lymphocytes and skeletal muscle.

Its subcellular location is the cytoplasm. The protein resides in the cell membrane. The catalysed reaction is L-seryl-[protein] + ATP = O-phospho-L-seryl-[protein] + ADP + H(+). The enzyme catalyses L-threonyl-[protein] + ATP = O-phospho-L-threonyl-[protein] + ADP + H(+). With respect to regulation, novel PKCs (PRKCD, PRKCE, PRKCH and PRKCQ) are calcium-insensitive, but activated by diacylglycerol (DAG) and phosphatidylserine. Three specific sites; Thr-538 (activation loop of the kinase domain), Ser-676 (turn motif) and Ser-695 (hydrophobic region), need to be phosphorylated for its full activation. Calcium-independent, phospholipid- and diacylglycerol (DAG)-dependent serine/threonine-protein kinase that mediates non-redundant functions in T-cell receptor (TCR) signaling, including T-cells activation, proliferation, differentiation and survival, by mediating activation of multiple transcription factors such as NF-kappa-B, JUN, NFATC1 and NFATC2. In TCR-CD3/CD28-co-stimulated T-cells, is required for the activation of NF-kappa-B and JUN, which in turn are essential for IL2 production, and participates in the calcium-dependent NFATC1 and NFATC2 transactivation. Mediates the activation of the canonical NF-kappa-B pathway (NFKB1) by direct phosphorylation of CARD11 on several serine residues, inducing CARD11 association with lipid rafts and recruitment of the BCL10-MALT1 complex, which then activates IKK complex, resulting in nuclear translocation and activation of NFKB1. May also play an indirect role in activation of the non-canonical NF-kappa-B (NFKB2) pathway. In the signaling pathway leading to JUN activation, acts by phosphorylating the mediator STK39/SPAK and may not act through MAP kinases signaling. Plays a critical role in TCR/CD28-induced NFATC1 and NFATC2 transactivation by participating in the regulation of reduced inositol 1,4,5-trisphosphate generation and intracellular calcium mobilization. After costimulation of T-cells through CD28 can phosphorylate CBLB and is required for the ubiquitination and subsequent degradation of CBLB, which is a prerequisite for the activation of TCR. During T-cells differentiation, plays an important role in the development of T-helper 2 (Th2) cells following immune and inflammatory responses, and, in the development of inflammatory autoimmune diseases, is necessary for the activation of IL17-producing Th17 cells. May play a minor role in Th1 response. Upon TCR stimulation, mediates T-cell protective survival signal by phosphorylating BAD, thus protecting T-cells from BAD-induced apoptosis, and by up-regulating BCL-X(L)/BCL2L1 levels through NF-kappa-B and JUN pathways. In platelets, regulates signal transduction downstream of the ITGA2B, CD36/GP4, F2R/PAR1 and F2RL3/PAR4 receptors, playing a positive role in 'outside-in' signaling and granule secretion signal transduction. May relay signals from the activated ITGA2B receptor by regulating the uncoupling of WASP and WIPF1, thereby permitting the regulation of actin filament nucleation and branching activity of the Arp2/3 complex. May mediate inhibitory effects of free fatty acids on insulin signaling by phosphorylating IRS1, which in turn blocks IRS1 tyrosine phosphorylation and downstream activation of the PI3K/AKT pathway. Phosphorylates MSN (moesin) in the presence of phosphatidylglycerol or phosphatidylinositol. Phosphorylates PDPK1 at 'Ser-504' and 'Ser-532' and negatively regulates its ability to phosphorylate PKB/AKT1. Phosphorylates CCDC88A/GIV and inhibits its guanine nucleotide exchange factor activity. Phosphorylates and activates LRRK1, which phosphorylates RAB proteins involved in intracellular trafficking. The chain is Protein kinase C theta type (Prkcq) from Mus musculus (Mouse).